The following is a 428-amino-acid chain: Enolase (428 aa).

Gln163 is a binding site for (2R)-2-phosphoglycerate. The active-site Proton donor is Glu205. Residues Asp242, Glu285, and Asp312 each coordinate Mg(2+). (2R)-2-phosphoglycerate contacts are provided by Lys337, Arg366, Ser367, and Lys388. The active-site Proton acceptor is Lys337.

Belongs to the enolase family. The cofactor is Mg(2+).

The protein localises to the cytoplasm. Its subcellular location is the secreted. It localises to the cell surface. The enzyme catalyses (2R)-2-phosphoglycerate = phosphoenolpyruvate + H2O. It functions in the pathway carbohydrate degradation; glycolysis; pyruvate from D-glyceraldehyde 3-phosphate: step 4/5. Its function is as follows. Catalyzes the reversible conversion of 2-phosphoglycerate (2-PG) into phosphoenolpyruvate (PEP). It is essential for the degradation of carbohydrates via glycolysis. This Erythrobacter litoralis (strain HTCC2594) protein is Enolase.